The chain runs to 303 residues: UDP-3-O-acyl-N-acetylglucosamine deacetylase (303 aa).

Residues His-78, His-237, and Asp-241 each contribute to the Zn(2+) site. Residue His-264 is the Proton donor of the active site.

It belongs to the LpxC family. It depends on Zn(2+) as a cofactor.

The enzyme catalyses a UDP-3-O-[(3R)-3-hydroxyacyl]-N-acetyl-alpha-D-glucosamine + H2O = a UDP-3-O-[(3R)-3-hydroxyacyl]-alpha-D-glucosamine + acetate. It functions in the pathway glycolipid biosynthesis; lipid IV(A) biosynthesis; lipid IV(A) from (3R)-3-hydroxytetradecanoyl-[acyl-carrier-protein] and UDP-N-acetyl-alpha-D-glucosamine: step 2/6. Catalyzes the hydrolysis of UDP-3-O-myristoyl-N-acetylglucosamine to form UDP-3-O-myristoylglucosamine and acetate, the committed step in lipid A biosynthesis. The protein is UDP-3-O-acyl-N-acetylglucosamine deacetylase of Cellvibrio japonicus (strain Ueda107) (Pseudomonas fluorescens subsp. cellulosa).